The chain runs to 299 residues: Peroxisomal biogenesis factor 19 (299 aa).

N-acetylalanine is present on A2. A docking to the peroxisome membrane and binding to PEX3 region spans residues 2 to 56 (AAAEGGCGAGVEADRELEELLESALDDFDKAKPSPAPSPTISAPDASGPQKRSPG). Residues 2 to 91 (AAAEGGCGAG…QATAEFEKAM (90 aa)) form a necessary for PEX19 function on peroxisome biogenesis region. Residues 25 to 63 (ALDDFDKAKPSPAPSPTISAPDASGPQKRSPGDTAKDAL) are disordered. Phosphoserine is present on residues S35, S39, S54, and S66. A Phosphothreonine modification is found at T236. Cysteine methyl ester is present on C296. A lipid anchor (S-farnesyl cysteine) is attached at C296. The propeptide at 297–299 (LIM) is removed in mature form.

The protein belongs to the peroxin-19 family. In terms of assembly, interacts with a broad range of peroxisomal membrane proteins, including PEX3, PEX10, PEX11A, PEX11B, PEX12, PEX13, PEX14 and PEX16, PXMP2/PMP22, PXMP4/PMP24, SLC25A17/PMP34, ABCD1/ALDP, ABCD2/ALDRP, and ABCD3/PMP70. Also interacts with the tumor suppressor CDKN2A/p19ARF.

The protein resides in the cytoplasm. It localises to the peroxisome membrane. Necessary for early peroxisomal biogenesis. Acts both as a cytosolic chaperone and as an import receptor for peroxisomal membrane proteins (PMPs). Binds and stabilizes newly synthesized PMPs in the cytoplasm by interacting with their hydrophobic membrane-spanning domains, and targets them to the peroxisome membrane by binding to the integral membrane protein PEX3. Excludes CDKN2A from the nucleus and prevents its interaction with MDM2, which results in active degradation of TP53. The protein is Peroxisomal biogenesis factor 19 (Pex19) of Rattus norvegicus (Rat).